The primary structure comprises 377 residues: Beta sliding clamp (377 aa).

Belongs to the beta sliding clamp family. As to quaternary structure, forms a ring-shaped head-to-tail homodimer around DNA which binds and tethers DNA polymerases and other proteins to the DNA. The DNA replisome complex has a single clamp-loading complex (3 tau and 1 each of delta, delta', psi and chi subunits) which binds 3 Pol III cores (1 core on the leading strand and 2 on the lagging strand) each with a beta sliding clamp dimer. Additional proteins in the replisome are other copies of gamma, psi and chi, Ssb, DNA helicase and RNA primase.

It localises to the cytoplasm. In terms of biological role, confers DNA tethering and processivity to DNA polymerases and other proteins. Acts as a clamp, forming a ring around DNA (a reaction catalyzed by the clamp-loading complex) which diffuses in an ATP-independent manner freely and bidirectionally along dsDNA. Initially characterized for its ability to contact the catalytic subunit of DNA polymerase III (Pol III), a complex, multichain enzyme responsible for most of the replicative synthesis in bacteria; Pol III exhibits 3'-5' exonuclease proofreading activity. The beta chain is required for initiation of replication as well as for processivity of DNA replication. The polypeptide is Beta sliding clamp (dnaN) (Staphylococcus epidermidis (strain ATCC 35984 / DSM 28319 / BCRC 17069 / CCUG 31568 / BM 3577 / RP62A)).